We begin with the raw amino-acid sequence, 483 residues long: Serralysin (483 aa).

His-184 serves as a coordination point for Zn(2+). Glu-185 is a catalytic residue. His-188 and His-194 together coordinate Zn(2+). Positions 263, 266, 295, 297, 298, 300, 337, and 339 each coordinate Ca(2+). Hemolysin-type calcium-binding repeat units lie at residues 342–359 (IGGS…ENIL) and 360–377 (KGGA…ADQL).

The protein belongs to the peptidase M10B family. Requires Zn(2+) as cofactor. The cofactor is Ca(2+).

Its subcellular location is the secreted. It catalyses the reaction Preferential cleavage of bonds with hydrophobic residues in P1'.. Inhibited by 8 mM 1,10-phenanthroline and 10 mM EDTA, but not by PMSF. Functionally, involved in the inhibition of insect antibacterial peptides. Reduces the antibacterial activity of G.mellonella hemolymph by 50%. Reduces the antibacterial activity of cecropin A by 80% and cecropin B by 75%. In Photorhabdus sp. (strain Az29), this protein is Serralysin.